Consider the following 837-residue polypeptide: MGELFRSEEMTLAQLFLQSEAAYCCVSELGELGKVQFRDLNPDVNVFQRKFVNEVRRCEEMDRKLRFVEKEIRKANIPIMDTGENPEVPFPRDMIDLEANFEKIENELKEINTNQEALKRNFLELTELKFILRKTQQFFDEMADPDLLEESSSLLEPSEMGRGTPLRLGFVAGVINRERIPTFERMLWRVCRGNVFLRQAEIENPLEDPVTGDYVHKSVFIIFFQGDQLKNRVKKICEGFRASLYPCPETPQERKEMASGVNTRIDDLQMVLNQTEDHRQRVLQAAAKNIRVWFIKVRKMKAIYHTLNLCNIDVTQKCLIAEVWCPVTDLDSIQFALRRGTEHSGSTVPSILNRMQTNQTPPTYNKTNKFTYGFQNIVDAYGIGTYREINPAPYTIITFPFLFAVMFGDFGHGILMTLFAVWMVLRESRILSQKNENEMFSTVFSGRYIILLMGVFSMYTGLIYNDCFSKSLNIFGSSWSVRPMFTYNWTEETLRGNPVLQLNPALPGVFGGPYPFGIDPIWNIATNKLTFLNSFKMKMSVILGIIHMLFGVSLSLFNHIYFKKPLNIYFGFIPEIIFMTSLFGYLVILIFYKWTAYDAHTSENAPSLLIHFINMFLFSYPESGYSMLYSGQKGIQCFLVVVALLCVPWMLLFKPLVLRRQYLRRKHLGTLNFGGIRVGNGPTEEDAEIIQHDQLSTHSEDADEPSEDEVFDFGDTMVHQAIHTIEYCLGCISNTASYLRLWALSLAHAQLSEVLWTMVIHIGLSVKSLAGGLVLFFFFTAFATLTVAILLIMEGLSAFLHALRLHWVEFQNKFYSGTGFKFLPFSFEHIREGKFEE.

The Cytoplasmic portion of the chain corresponds to 1 to 388 (MGELFRSEEM…DAYGIGTYRE (388 aa)). Residues Thr250 and Thr360 each carry the phosphothreonine modification. Tyr364 is subject to Phosphotyrosine. Residues 389-407 (INPAPYTIITFPFLFAVMF) traverse the membrane as a helical segment. The Vacuolar portion of the chain corresponds to 408–409 (GD). A helical membrane pass occupies residues 410–426 (FGHGILMTLFAVWMVLR). The Cytoplasmic portion of the chain corresponds to 427–441 (ESRILSQKNENEMFS). Residues 442-471 (TVFSGRYIILLMGVFSMYTGLIYNDCFSKS) traverse the membrane as a helical segment. Residues 472-534 (LNIFGSSWSV…ATNKLTFLNS (63 aa)) lie on the Vacuolar side of the membrane. N-linked (GalNAc...) asparagine glycosylation occurs at Asn488. A helical membrane pass occupies residues 535 to 554 (FKMKMSVILGIIHMLFGVSL). The Cytoplasmic segment spans residues 555–572 (SLFNHIYFKKPLNIYFGF). Residues 573–593 (IPEIIFMTSLFGYLVILIFYK) form a helical membrane-spanning segment. The Vacuolar segment spans residues 594 to 638 (WTAYDAHTSENAPSLLIHFINMFLFSYPESGYSMLYSGQKGIQCF). The helical transmembrane segment at 639-658 (LVVVALLCVPWMLLFKPLVL) threads the bilayer. Over 659 to 724 (RRQYLRRKHL…DTMVHQAIHT (66 aa)) the chain is Cytoplasmic. Residues 725 to 749 (IEYCLGCISNTASYLRLWALSLAHA) traverse the membrane as a helical segment. At 750–770 (QLSEVLWTMVIHIGLSVKSLA) the chain is on the vacuolar side. A helical transmembrane segment spans residues 771–809 (GGLVLFFFFTAFATLTVAILLIMEGLSAFLHALRLHWVE). Over 810 to 837 (FQNKFYSGTGFKFLPFSFEHIREGKFEE) the chain is Cytoplasmic.

Belongs to the V-ATPase 116 kDa subunit family. V-ATPase is a heteromultimeric enzyme made up of two complexes: the ATP-hydrolytic V1 complex and the proton translocation V0 complex. The V1 complex consists of three catalytic AB heterodimers that form a heterohexamer, three peripheral stalks each consisting of EG heterodimers, one central rotor including subunits D and F, and the regulatory subunits C and H. The proton translocation complex V0 consists of the proton transport subunit a, a ring of proteolipid subunits c9c'', rotary subunit d, subunits e and f, and the accessory subunits ATP6AP1/Ac45 and ATP6AP2/PRR. Interacts with SPAAR.

Its subcellular location is the cytoplasmic vesicle. The protein resides in the clathrin-coated vesicle membrane. It is found in the secretory vesicle. The protein localises to the synaptic vesicle membrane. It localises to the melanosome. Subunit of the V0 complex of vacuolar(H+)-ATPase (V-ATPase), a multisubunit enzyme composed of a peripheral complex (V1) that hydrolyzes ATP and a membrane integral complex (V0) that transports protons across cellular membranes. V-ATPase is responsible for the acidification of various organelles, such as lysosomes, endosomes, the trans-Golgi network, and secretory granules, including synaptic vesicles. In certain cell types, can be exported to the plasma membrane, where it is involved in the acidification of the extracellular environment. Required for assembly and activity of the vacuolar ATPase. Through its action on compartment acidification, plays an essential role in neuronal development in terms of integrity and connectivity of neurons. In Homo sapiens (Human), this protein is V-type proton ATPase 116 kDa subunit a 1 (ATP6V0A1).